The following is a 76-amino-acid chain: Repressor protein of division inhibition gene dicB (76 aa).

The DNA-binding element occupies 13 to 33 (KTKLAQAAGIRLASLYSWKGD).

Its function is as follows. This protein is a repressor of division inhibition gene dicB. This Escherichia coli (strain K12) protein is Repressor protein of division inhibition gene dicB (dicC).